The following is a 378-amino-acid chain: UPF0754 membrane protein Bcer98_0694 (378 aa).

Residues 358-378 (LGALLGGTIGLMQGILLLFLM) traverse the membrane as a helical segment.

Belongs to the UPF0754 family.

It localises to the cell membrane. The chain is UPF0754 membrane protein Bcer98_0694 from Bacillus cytotoxicus (strain DSM 22905 / CIP 110041 / 391-98 / NVH 391-98).